The sequence spans 427 residues: Glutamate-1-semialdehyde 2,1-aminomutase (427 aa).

At lysine 265 the chain carries N6-(pyridoxal phosphate)lysine.

It belongs to the class-III pyridoxal-phosphate-dependent aminotransferase family. HemL subfamily. Homodimer. Pyridoxal 5'-phosphate serves as cofactor.

The protein resides in the cytoplasm. The enzyme catalyses (S)-4-amino-5-oxopentanoate = 5-aminolevulinate. It functions in the pathway porphyrin-containing compound metabolism; protoporphyrin-IX biosynthesis; 5-aminolevulinate from L-glutamyl-tRNA(Glu): step 2/2. In Pseudomonas fluorescens (strain Pf0-1), this protein is Glutamate-1-semialdehyde 2,1-aminomutase.